Consider the following 334-residue polypeptide: Adenosine deaminase (334 aa).

Residues H12 and H14 each contribute to the Zn(2+) site. Substrate-binding residues include H14, D16, and G170. Zn(2+) is bound at residue H197. E200 functions as the Proton donor in the catalytic mechanism. Position 278 (D278) interacts with Zn(2+). D279 lines the substrate pocket.

This sequence belongs to the metallo-dependent hydrolases superfamily. Adenosine and AMP deaminases family. Adenosine deaminase subfamily. Requires Zn(2+) as cofactor.

The catalysed reaction is adenosine + H2O + H(+) = inosine + NH4(+). It catalyses the reaction 2'-deoxyadenosine + H2O + H(+) = 2'-deoxyinosine + NH4(+). Catalyzes the hydrolytic deamination of adenosine and 2-deoxyadenosine. This Yersinia pseudotuberculosis serotype IB (strain PB1/+) protein is Adenosine deaminase.